Reading from the N-terminus, the 345-residue chain is Ferrochelatase (345 aa).

Fe cation is bound by residues H215 and E296.

This sequence belongs to the ferrochelatase family.

The protein resides in the cytoplasm. It catalyses the reaction heme b + 2 H(+) = protoporphyrin IX + Fe(2+). It functions in the pathway porphyrin-containing compound metabolism; protoheme biosynthesis; protoheme from protoporphyrin-IX: step 1/1. Its function is as follows. Catalyzes the ferrous insertion into protoporphyrin IX. The sequence is that of Ferrochelatase from Nitrobacter hamburgensis (strain DSM 10229 / NCIMB 13809 / X14).